Reading from the N-terminus, the 117-residue chain is Small ribosomal subunit protein eS25 (117 aa).

Residues 1-38 (MPPKKDAKSSAKQPQKTQKKKEGSGGGKAKKKKWSKGK) are disordered. A compositionally biased stretch (basic residues) spans 28–37 (KAKKKKWSKG).

It belongs to the eukaryotic ribosomal protein eS25 family.

This chain is Small ribosomal subunit protein eS25 (RpS25), found in Drosophila melanogaster (Fruit fly).